The sequence spans 371 residues: tRNA-specific 2-thiouridylase MnmA (371 aa).

Residues G13–S20 and M39 each bind ATP. The interval N99–D101 is interaction with target base in tRNA. C104 acts as the Nucleophile in catalysis. C104 and C200 form a disulfide bridge. G128 lines the ATP pocket. The interaction with tRNA stretch occupies residues K150–Q152. C200 (cysteine persulfide intermediate) is an active-site residue. An interaction with tRNA region spans residues R308–Y309.

Belongs to the MnmA/TRMU family.

It localises to the cytoplasm. It catalyses the reaction S-sulfanyl-L-cysteinyl-[protein] + uridine(34) in tRNA + AH2 + ATP = 2-thiouridine(34) in tRNA + L-cysteinyl-[protein] + A + AMP + diphosphate + H(+). Its function is as follows. Catalyzes the 2-thiolation of uridine at the wobble position (U34) of tRNA, leading to the formation of s(2)U34. This Listeria welshimeri serovar 6b (strain ATCC 35897 / DSM 20650 / CCUG 15529 / CIP 8149 / NCTC 11857 / SLCC 5334 / V8) protein is tRNA-specific 2-thiouridylase MnmA.